A 134-amino-acid polypeptide reads, in one-letter code: 4-carboxymuconolactone decarboxylase (134 aa).

Belongs to the carboxymuconolactone decarboxylase family.

The enzyme catalyses (R)-2-(carboxymethyl)-5-oxo-2,5-dihydro-2-furoate + H(+) = (4,5-dihydro-5-oxofuran-2-yl)-acetate + CO2. It functions in the pathway aromatic compound metabolism; beta-ketoadipate pathway; 5-oxo-4,5-dihydro-2-furylacetate from 3-carboxy-cis,cis-muconate: step 2/2. The sequence is that of 4-carboxymuconolactone decarboxylase (pcaC) from Acinetobacter baylyi (strain ATCC 33305 / BD413 / ADP1).